An 87-amino-acid polypeptide reads, in one-letter code: Small ribosomal subunit protein bS16 (87 aa).

It belongs to the bacterial ribosomal protein bS16 family.

This Ehrlichia chaffeensis (strain ATCC CRL-10679 / Arkansas) protein is Small ribosomal subunit protein bS16.